The primary structure comprises 763 residues: Autophagy-related protein 18f (763 aa).

WD repeat units lie at residues 345–385 (AHKS…STSR) and 402–441 (FTNA…EGDA). A compositionally biased stretch (polar residues) spans 701–711 (NESIQSPSTTT). Residues 701-763 (NESIQSPSTT…SEDEDEEQVD (63 aa)) are disordered. 2 stretches are compositionally biased toward basic and acidic residues: residues 712 to 725 (QDDK…HGTE) and 741 to 754 (PVDK…KNHS).

The protein belongs to the WD repeat PROPPIN family. In terms of assembly, component of the PI(3,5)P2 regulatory complex at least composed of ATG18, SAC/FIG4, FAB1 and VAC14. As to expression, expressed in roots, flowers and leaves.

The protein localises to the preautophagosomal structure membrane. It localises to the vacuole membrane. The PI(3,5)P2 regulatory complex regulates both the synthesis and turnover of phosphatidylinositol 3,5-bisphosphate (PtdIns(3,5)P2). Required for autophagy. The chain is Autophagy-related protein 18f (ATG18F) from Arabidopsis thaliana (Mouse-ear cress).